Reading from the N-terminus, the 486-residue chain is Differentially expressed in FDCP 8 homolog (486 aa).

Positions 1-26 (MSSWCSSEDAHNQSSTPSTRSRKSSW) are disordered. 2 consecutive Phorbol-ester/DAG-type zinc fingers follow at residues 160-212 (GHEF…KRVC) and 393-459 (IHTV…SLNC).

It belongs to the DEF8 family.

The protein is Differentially expressed in FDCP 8 homolog of Caenorhabditis elegans.